The chain runs to 115 residues: Promotilin (115 aa).

Positions 1-25 are cleaved as a signal peptide; it reads MVSRKAVAALLVVHVAAMLASQTEA. Residues 39 to 72 are disordered; sequence QEKERNKGQKKSLSVWQRSGEEGPVDPAEPIREE.

Belongs to the motilin family.

The protein resides in the secreted. Functionally, plays an important role in the regulation of interdigestive gastrointestinal motility and indirectly causes rhythmic contraction of duodenal and colonic smooth muscle. The protein is Promotilin (MLN) of Homo sapiens (Human).